The primary structure comprises 346 residues: Holliday junction branch migration complex subunit RuvB (346 aa).

The tract at residues 1–182 is large ATPase domain (RuvB-L); that stretch reads MKIELLNTPA…FGISSRFDYY (182 aa). ATP is bound by residues I21, R22, G63, K66, T67, T68, 129–131, R172, Y182, and R219; that span reads EDF. Position 67 (T67) interacts with Mg(2+). A small ATPAse domain (RuvB-S) region spans residues 183 to 253; sequence PPELLERIIL…IAMTTLASLE (71 aa). The tract at residues 256–346 is head domain (RuvB-H); the sequence is EEGLDDMDKK…GPLFDAAPAR (91 aa). Residues R311 and R316 each contribute to the DNA site.

Belongs to the RuvB family. In terms of assembly, homohexamer. Forms an RuvA(8)-RuvB(12)-Holliday junction (HJ) complex. HJ DNA is sandwiched between 2 RuvA tetramers; dsDNA enters through RuvA and exits via RuvB. An RuvB hexamer assembles on each DNA strand where it exits the tetramer. Each RuvB hexamer is contacted by two RuvA subunits (via domain III) on 2 adjacent RuvB subunits; this complex drives branch migration. In the full resolvosome a probable DNA-RuvA(4)-RuvB(12)-RuvC(2) complex forms which resolves the HJ.

It localises to the cytoplasm. The catalysed reaction is ATP + H2O = ADP + phosphate + H(+). Its function is as follows. The RuvA-RuvB-RuvC complex processes Holliday junction (HJ) DNA during genetic recombination and DNA repair, while the RuvA-RuvB complex plays an important role in the rescue of blocked DNA replication forks via replication fork reversal (RFR). RuvA specifically binds to HJ cruciform DNA, conferring on it an open structure. The RuvB hexamer acts as an ATP-dependent pump, pulling dsDNA into and through the RuvAB complex. RuvB forms 2 homohexamers on either side of HJ DNA bound by 1 or 2 RuvA tetramers; 4 subunits per hexamer contact DNA at a time. Coordinated motions by a converter formed by DNA-disengaged RuvB subunits stimulates ATP hydrolysis and nucleotide exchange. Immobilization of the converter enables RuvB to convert the ATP-contained energy into a lever motion, pulling 2 nucleotides of DNA out of the RuvA tetramer per ATP hydrolyzed, thus driving DNA branch migration. The RuvB motors rotate together with the DNA substrate, which together with the progressing nucleotide cycle form the mechanistic basis for DNA recombination by continuous HJ branch migration. Branch migration allows RuvC to scan DNA until it finds its consensus sequence, where it cleaves and resolves cruciform DNA. The protein is Holliday junction branch migration complex subunit RuvB of Chlorobium phaeobacteroides (strain DSM 266 / SMG 266 / 2430).